The chain runs to 210 residues: FMN-dependent NADH:quinone oxidoreductase 9 (210 aa).

FMN contacts are provided by residues Ser10 and 16 to 18 (SAS).

Belongs to the azoreductase type 1 family. As to quaternary structure, homodimer. FMN is required as a cofactor.

The enzyme catalyses 2 a quinone + NADH + H(+) = 2 a 1,4-benzosemiquinone + NAD(+). The catalysed reaction is N,N-dimethyl-1,4-phenylenediamine + anthranilate + 2 NAD(+) = 2-(4-dimethylaminophenyl)diazenylbenzoate + 2 NADH + 2 H(+). Its function is as follows. Quinone reductase that provides resistance to thiol-specific stress caused by electrophilic quinones. Functionally, also exhibits azoreductase activity. Catalyzes the reductive cleavage of the azo bond in aromatic azo compounds to the corresponding amines. The protein is FMN-dependent NADH:quinone oxidoreductase 9 of Burkholderia lata (strain ATCC 17760 / DSM 23089 / LMG 22485 / NCIMB 9086 / R18194 / 383).